The primary structure comprises 408 residues: RNA-splicing ligase RtcB (408 aa).

Residues Asp75, Cys78, His168, His185, and His281 each contribute to the Mn(2+) site. 167–171 (NHFIE) is a GMP binding site. Residues 281–282 (HN), 313–316 (PGSM), Ser320, 337–340 (HGAG), and Lys407 contribute to the GMP site. The GMP-histidine intermediate role is filled by His337.

The protein belongs to the RtcB family. Monomer. Mn(2+) is required as a cofactor.

The catalysed reaction is a 3'-end 3'-phospho-ribonucleotide-RNA + a 5'-end dephospho-ribonucleoside-RNA + GTP = a ribonucleotidyl-ribonucleotide-RNA + GMP + diphosphate. The enzyme catalyses a 3'-end 2',3'-cyclophospho-ribonucleotide-RNA + a 5'-end dephospho-ribonucleoside-RNA + GTP + H2O = a ribonucleotidyl-ribonucleotide-RNA + GMP + diphosphate + H(+). In terms of biological role, GTP-dependent RNA ligase that is involved in RNA repair. Joins RNA with 2',3'-cyclic-phosphate or 3'-phosphate ends to RNA with 5'-hydroxy ends. Also acts as a DNA ligase in case of DNA damage by splicing 'dirty' DNA breaks, characterized by 3'-phosphate (or cyclic-phosphate) and 5'-hydroxy ends that cannot be sealed by classical DNA ligases. Repairs tRNA cleaved by colicins D or E5, does not repair damaged 16S rRNA. Its function is as follows. Able to catalyze tRNA splicing in vivo in yeast, but bacteria are not known to splice tRNA. This is RNA-splicing ligase RtcB from Escherichia coli (strain K12).